The following is a 353-amino-acid chain: Photosystem II D2 protein (353 aa).

Position 2 is an N-acetylthreonine (Thr2). Thr2 carries the phosphothreonine modification. The helical transmembrane segment at Cys41–Thr61 threads the bilayer. His118 is a chlorophyll a binding site. Residues Gly125 to Pro141 traverse the membrane as a helical segment. Gln130 and Asn143 together coordinate pheophytin a. Residues Val153–Ser166 traverse the membrane as a helical segment. Position 198 (His198) interacts with chlorophyll a. A helical membrane pass occupies residues Ala208–Asp228. The a plastoquinone site is built by His215 and Phe262. Residue His215 coordinates Fe cation. His269 provides a ligand contact to Fe cation. A helical transmembrane segment spans residues Gly279 to Arg295.

Belongs to the reaction center PufL/M/PsbA/D family. PSII is composed of 1 copy each of membrane proteins PsbA, PsbB, PsbC, PsbD, PsbE, PsbF, PsbH, PsbI, PsbJ, PsbK, PsbL, PsbM, PsbT, PsbX, PsbY, PsbZ, Psb30/Ycf12, at least 3 peripheral proteins of the oxygen-evolving complex and a large number of cofactors. It forms dimeric complexes. The D1/D2 heterodimer binds P680, chlorophylls that are the primary electron donor of PSII, and subsequent electron acceptors. It shares a non-heme iron and each subunit binds pheophytin, quinone, additional chlorophylls, carotenoids and lipids. There is also a Cl(-1) ion associated with D1 and D2, which is required for oxygen evolution. The PSII complex binds additional chlorophylls, carotenoids and specific lipids. is required as a cofactor.

It is found in the plastid. Its subcellular location is the chloroplast thylakoid membrane. It carries out the reaction 2 a plastoquinone + 4 hnu + 2 H2O = 2 a plastoquinol + O2. Photosystem II (PSII) is a light-driven water:plastoquinone oxidoreductase that uses light energy to abstract electrons from H(2)O, generating O(2) and a proton gradient subsequently used for ATP formation. It consists of a core antenna complex that captures photons, and an electron transfer chain that converts photonic excitation into a charge separation. The D1/D2 (PsbA/PsbD) reaction center heterodimer binds P680, the primary electron donor of PSII as well as several subsequent electron acceptors. D2 is needed for assembly of a stable PSII complex. The protein is Photosystem II D2 protein of Nuphar advena (Common spatterdock).